The primary structure comprises 194 residues: NADH-quinone oxidoreductase subunit B (194 aa).

Positions 73, 74, 138, and 168 each coordinate [4Fe-4S] cluster.

Belongs to the complex I 20 kDa subunit family. NDH-1 is composed of 14 different subunits. Subunits NuoB, C, D, E, F, and G constitute the peripheral sector of the complex. The cofactor is [4Fe-4S] cluster.

It is found in the cell inner membrane. The catalysed reaction is a quinone + NADH + 5 H(+)(in) = a quinol + NAD(+) + 4 H(+)(out). Functionally, NDH-1 shuttles electrons from NADH, via FMN and iron-sulfur (Fe-S) centers, to quinones in the respiratory chain. The immediate electron acceptor for the enzyme in this species is believed to be ubiquinone. Couples the redox reaction to proton translocation (for every two electrons transferred, four hydrogen ions are translocated across the cytoplasmic membrane), and thus conserves the redox energy in a proton gradient. This Rhizobium leguminosarum bv. trifolii (strain WSM2304) protein is NADH-quinone oxidoreductase subunit B.